Reading from the N-terminus, the 190-residue chain is Double zinc ribbon protein MJ0416 (190 aa).

The DZANK-type zinc-finger motif lies at 134-183 (CPNCNNYISDSWKYCAHCGAKLKEEEEEVLRCPNCKRPVQPEWIVCPYCG).

The polypeptide is Double zinc ribbon protein MJ0416 (Methanocaldococcus jannaschii (strain ATCC 43067 / DSM 2661 / JAL-1 / JCM 10045 / NBRC 100440) (Methanococcus jannaschii)).